The chain runs to 201 residues: Holliday junction branch migration complex subunit RuvA (201 aa).

The tract at residues 1 to 64 (MFAYIKGVLA…EFSHTLYGFL (64 aa)) is domain I. Positions 65-143 (SYQERDIFEI…AIGHLDTSDH (79 aa)) are domain II. Positions 144-153 (IEPLTQDPKS) are flexible linker. The interval 153 to 201 (SKSVQDAMLALINLGYNQTTAQKAIKQGMKELPEEIDLAQLITVALKHV) is domain III.

The protein belongs to the RuvA family. In terms of assembly, homotetramer. Forms an RuvA(8)-RuvB(12)-Holliday junction (HJ) complex. HJ DNA is sandwiched between 2 RuvA tetramers; dsDNA enters through RuvA and exits via RuvB. An RuvB hexamer assembles on each DNA strand where it exits the tetramer. Each RuvB hexamer is contacted by two RuvA subunits (via domain III) on 2 adjacent RuvB subunits; this complex drives branch migration. In the full resolvosome a probable DNA-RuvA(4)-RuvB(12)-RuvC(2) complex forms which resolves the HJ.

The protein localises to the cytoplasm. In terms of biological role, the RuvA-RuvB-RuvC complex processes Holliday junction (HJ) DNA during genetic recombination and DNA repair, while the RuvA-RuvB complex plays an important role in the rescue of blocked DNA replication forks via replication fork reversal (RFR). RuvA specifically binds to HJ cruciform DNA, conferring on it an open structure. The RuvB hexamer acts as an ATP-dependent pump, pulling dsDNA into and through the RuvAB complex. HJ branch migration allows RuvC to scan DNA until it finds its consensus sequence, where it cleaves and resolves the cruciform DNA. This chain is Holliday junction branch migration complex subunit RuvA, found in Protochlamydia amoebophila (strain UWE25).